The following is a 131-amino-acid chain: Protein yippee-like PJ691.02 (131 aa).

Residues 12–109 (RCYVCAKCKT…LEMQDAVLQR (98 aa)) form the Yippee domain. Zn(2+) is bound by residues Cys-16, Cys-19, Cys-72, and Cys-75.

This sequence belongs to the yippee family.

This Schizosaccharomyces pombe (strain 972 / ATCC 24843) (Fission yeast) protein is Protein yippee-like PJ691.02.